The primary structure comprises 311 residues: Methionyl-tRNA formyltransferase (311 aa).

112 to 115 serves as a coordination point for (6S)-5,6,7,8-tetrahydrofolate; the sequence is SLLP.

The protein belongs to the Fmt family.

It carries out the reaction L-methionyl-tRNA(fMet) + (6R)-10-formyltetrahydrofolate = N-formyl-L-methionyl-tRNA(fMet) + (6S)-5,6,7,8-tetrahydrofolate + H(+). Functionally, attaches a formyl group to the free amino group of methionyl-tRNA(fMet). The formyl group appears to play a dual role in the initiator identity of N-formylmethionyl-tRNA by promoting its recognition by IF2 and preventing the misappropriation of this tRNA by the elongation apparatus. The sequence is that of Methionyl-tRNA formyltransferase from Bradyrhizobium diazoefficiens (strain JCM 10833 / BCRC 13528 / IAM 13628 / NBRC 14792 / USDA 110).